The chain runs to 1062 residues: Carbamoyl phosphate synthase large chain (1062 aa).

Residues 1–401 (MPKRTDIHKI…AMQKAVQSLE (401 aa)) form a carboxyphosphate synthetic domain region. ATP is bound by residues arginine 129, arginine 169, glycine 175, glycine 176, lysine 208, isoleucine 210, glutamate 215, glycine 241, isoleucine 242, histidine 243, glutamine 284, and glutamate 298. The ATP-grasp 1 domain maps to 133-327 (KELCQKLGEP…IAKMAAKIAI (195 aa)). Glutamine 284, glutamate 298, and asparagine 300 together coordinate Mg(2+). Mn(2+) contacts are provided by glutamine 284, glutamate 298, and asparagine 300. The interval 402–546 (IDEKDLYSAK…YSTYDGENES (145 aa)) is oligomerization domain. Residues 547-929 (RKSGKKSVIV…ALYKAFAGAK (383 aa)) are carbamoyl phosphate synthetic domain. The region spanning 671–861 (DQIIKSLHLH…MAQVATRVIM (191 aa)) is the ATP-grasp 2 domain. The ATP site is built by arginine 707, aspartate 746, leucine 748, glutamate 752, glycine 777, valine 778, histidine 779, serine 780, glutamine 820, and glutamate 832. The Mg(2+) site is built by glutamine 820, glutamate 832, and asparagine 834. Mn(2+)-binding residues include glutamine 820, glutamate 832, and asparagine 834. Residues 930 to 1062 (MQLPENGNVL…NRSFATDALK (133 aa)) form the MGS-like domain. The tract at residues 930–1062 (MQLPENGNVL…NRSFATDALK (133 aa)) is allosteric domain.

This sequence belongs to the CarB family. Composed of two chains; the small (or glutamine) chain promotes the hydrolysis of glutamine to ammonia, which is used by the large (or ammonia) chain to synthesize carbamoyl phosphate. Tetramer of heterodimers (alpha,beta)4. Mg(2+) is required as a cofactor. Requires Mn(2+) as cofactor.

It catalyses the reaction hydrogencarbonate + L-glutamine + 2 ATP + H2O = carbamoyl phosphate + L-glutamate + 2 ADP + phosphate + 2 H(+). It carries out the reaction hydrogencarbonate + NH4(+) + 2 ATP = carbamoyl phosphate + 2 ADP + phosphate + 2 H(+). It functions in the pathway amino-acid biosynthesis; L-arginine biosynthesis; carbamoyl phosphate from bicarbonate: step 1/1. The protein operates within pyrimidine metabolism; UMP biosynthesis via de novo pathway; (S)-dihydroorotate from bicarbonate: step 1/3. In terms of biological role, large subunit of the glutamine-dependent carbamoyl phosphate synthetase (CPSase). CPSase catalyzes the formation of carbamoyl phosphate from the ammonia moiety of glutamine, carbonate, and phosphate donated by ATP, constituting the first step of 2 biosynthetic pathways, one leading to arginine and/or urea and the other to pyrimidine nucleotides. The large subunit (synthetase) binds the substrates ammonia (free or transferred from glutamine from the small subunit), hydrogencarbonate and ATP and carries out an ATP-coupled ligase reaction, activating hydrogencarbonate by forming carboxy phosphate which reacts with ammonia to form carbamoyl phosphate. The polypeptide is Carbamoyl phosphate synthase large chain (Lactobacillus helveticus (strain DPC 4571)).